Here is a 37-residue protein sequence, read N- to C-terminus: Cytochrome b6-f complex subunit 5 (37 aa).

Residues 5–25 form a helical membrane-spanning segment; it reads LLSGIILGLIPITICGLFFTA.

The protein belongs to the PetG family. The 4 large subunits of the cytochrome b6-f complex are cytochrome b6, subunit IV (17 kDa polypeptide, PetD), cytochrome f and the Rieske protein, while the 4 small subunits are PetG, PetL, PetM and PetN. The complex functions as a dimer.

The protein localises to the plastid. The protein resides in the chloroplast thylakoid membrane. Functionally, component of the cytochrome b6-f complex, which mediates electron transfer between photosystem II (PSII) and photosystem I (PSI), cyclic electron flow around PSI, and state transitions. PetG is required for either the stability or assembly of the cytochrome b6-f complex. The protein is Cytochrome b6-f complex subunit 5 of Euglena gracilis.